The following is a 310-amino-acid chain: Ribosomal RNA small subunit methyltransferase H (310 aa).

S-adenosyl-L-methionine is bound by residues Ala33–His35, Asp53, Phe79, Asp100, and Gln107.

Belongs to the methyltransferase superfamily. RsmH family.

It localises to the cytoplasm. It carries out the reaction cytidine(1402) in 16S rRNA + S-adenosyl-L-methionine = N(4)-methylcytidine(1402) in 16S rRNA + S-adenosyl-L-homocysteine + H(+). Functionally, specifically methylates the N4 position of cytidine in position 1402 (C1402) of 16S rRNA. The protein is Ribosomal RNA small subunit methyltransferase H of Clostridium botulinum (strain Alaska E43 / Type E3).